The sequence spans 318 residues: Aspartate carbamoyltransferase catalytic subunit (318 aa).

Carbamoyl phosphate-binding residues include arginine 56 and threonine 57. An L-aspartate-binding site is contributed by lysine 84. Residues arginine 106, histidine 143, and glutamine 146 each coordinate carbamoyl phosphate. Residues arginine 176 and arginine 230 each contribute to the L-aspartate site. Residues glycine 271 and proline 272 each coordinate carbamoyl phosphate.

It belongs to the aspartate/ornithine carbamoyltransferase superfamily. ATCase family. In terms of assembly, heterododecamer (2C3:3R2) of six catalytic PyrB chains organized as two trimers (C3), and six regulatory PyrI chains organized as three dimers (R2).

It carries out the reaction carbamoyl phosphate + L-aspartate = N-carbamoyl-L-aspartate + phosphate + H(+). It functions in the pathway pyrimidine metabolism; UMP biosynthesis via de novo pathway; (S)-dihydroorotate from bicarbonate: step 2/3. Functionally, catalyzes the condensation of carbamoyl phosphate and aspartate to form carbamoyl aspartate and inorganic phosphate, the committed step in the de novo pyrimidine nucleotide biosynthesis pathway. This chain is Aspartate carbamoyltransferase catalytic subunit, found in Mycobacterium avium (strain 104).